The following is a 693-amino-acid chain: Zinc finger protein 441 (693 aa).

The region spanning 4 to 79 (VAFEDVAINF…ERACEIKDNS (76 aa)) is the KRAB domain. A C2H2-type 1 zinc finger spans residues 169-190 (YDCKECASFSSLENLQRHMAAH). The C2H2-type 2; degenerate zinc-finger motif lies at 196–218 (RICKLCGNAFIWPSLFHMLRRTH). The segment at 224–246 (YEYEQCSTAFPAYSSTLRHERTH) adopts a C2H2-type 3; degenerate zinc-finger fold. The segment at 252-274 (YQCKQCGKAFSCSCYTQLYERTH) adopts a C2H2-type 4; degenerate zinc-finger fold. 15 consecutive C2H2-type zinc fingers follow at residues 280-302 (YECK…MIVH), 308-330 (HKCK…KRTH), 336-358 (YECK…MITH), 364-386 (HKCK…ETTH), 392-413 (YKCE…ETTH), 419-441 (YKCK…ERIH), 447-469 (YKCK…EKTH), 475-497 (YECK…MIMH), 503-525 (HKCK…ERIH), 531-553 (YKCK…ERTH), 559-581 (YGCQ…MITH), 587-609 (HKCK…ERTH), 615-637 (YECK…ERVH), 643-665 (YKCK…ERTH), and 671-693 (YKCK…EMTH).

The protein belongs to the krueppel C2H2-type zinc-finger protein family.

Its subcellular location is the nucleus. Its function is as follows. May be involved in transcriptional regulation. The protein is Zinc finger protein 441 (ZNF441) of Homo sapiens (Human).